A 1616-amino-acid polypeptide reads, in one-letter code: Protein P200 (1616 aa).

Disordered regions lie at residues 1–41 (MPKT…DKVE), 878–909 (HFQP…QAEF), 931–975 (QQLE…LDQN), 1004–1083 (DNVE…EPVD), 1100–1132 (FDKN…TVGE), and 1159–1433 (ISEP…SEEE). The tract at residues 891 to 1389 (EAKFDSPVEI…QEAKFDSPVE (499 aa)) is 2 X 26 AA repeats. The span at 938–952 (EETVVTPTEVTAFEP) shows a compositional bias: low complexity. Basic and acidic residues-rich tracts occupy residues 1012–1029 (QPKE…KELQ) and 1059–1081 (VFEK…KSEP). Tandem repeats lie at residues 1161–1186 (EPQV…SPVE) and 1205–1236 (EIQP…SPVE). Polar residues-rich tracts occupy residues 1200–1227 (VQTQ…QTPQ) and 1242–1251 (EFSSEPTQQH). The tract at residues 1205 to 1389 (EIQPVESQPE…QEAKFDSPVE (185 aa)) is 2 X 32 AA repeats. A compositionally biased stretch (acidic residues) spans 1256-1270 (ASFDEPNYDFDEPNY). Polar residues predominate over residues 1276 to 1285 (SYDSDLQPSE). Residues 1288–1302 (YDVDEPNYDFDEPNY) show a composition bias toward acidic residues. Over residues 1309–1323 (SEPQFEPQVEQQPGE) the composition is skewed to low complexity. 2 repeat units span residues 1310-1339 (EPQF…SPVE) and 1358-1389 (EIQP…SPVE). Over residues 1353–1380 (VQTQPEIQPVESQPEATFDTVQPEQTPQ) the composition is skewed to polar residues. Positions 1392–1406 (QEPQVSSEPEVVVQP) are enriched in low complexity. The segment covering 1416-1433 (VLEEPQADEIQPEASEEE) has biased composition (acidic residues).

Could be an accessory structural component in cytadherence. In Mycoplasma genitalium (strain ATCC 33530 / DSM 19775 / NCTC 10195 / G37) (Mycoplasmoides genitalium), this protein is Protein P200.